Here is a 126-residue protein sequence, read N- to C-terminus: Fluoride-specific ion channel FluC 2 (126 aa).

4 helical membrane-spanning segments follow: residues 11–31 (VLLI…ICEH), 36–56 (LGIL…MYDA), 69–89 (AFGT…VQSF), and 93–113 (FLPA…GVFF). Na(+) contacts are provided by glycine 76 and threonine 79.

The protein belongs to the fluoride channel Fluc/FEX (TC 1.A.43) family.

It is found in the cell membrane. It catalyses the reaction fluoride(in) = fluoride(out). Its activity is regulated as follows. Na(+) is not transported, but it plays an essential structural role and its presence is essential for fluoride channel function. Functionally, fluoride-specific ion channel. Important for reducing fluoride concentration in the cell, thus reducing its toxicity. This Methanosarcina mazei (strain ATCC BAA-159 / DSM 3647 / Goe1 / Go1 / JCM 11833 / OCM 88) (Methanosarcina frisia) protein is Fluoride-specific ion channel FluC 2.